A 510-amino-acid chain; its full sequence is tRNA-2-methylthio-N(6)-dimethylallyladenosine synthase (510 aa).

The MTTase N-terminal domain occupies R19–H144. [4Fe-4S] cluster contacts are provided by C28, C73, C107, C181, C185, and C188. A Radical SAM core domain is found at R167–E397. The region spanning Q400–S470 is the TRAM domain. Basic and acidic residues predominate over residues A482–P492. The disordered stretch occupies residues A482–A510.

It belongs to the methylthiotransferase family. MiaB subfamily. In terms of assembly, monomer. It depends on [4Fe-4S] cluster as a cofactor.

It is found in the cytoplasm. The catalysed reaction is N(6)-dimethylallyladenosine(37) in tRNA + (sulfur carrier)-SH + AH2 + 2 S-adenosyl-L-methionine = 2-methylsulfanyl-N(6)-dimethylallyladenosine(37) in tRNA + (sulfur carrier)-H + 5'-deoxyadenosine + L-methionine + A + S-adenosyl-L-homocysteine + 2 H(+). Functionally, catalyzes the methylthiolation of N6-(dimethylallyl)adenosine (i(6)A), leading to the formation of 2-methylthio-N6-(dimethylallyl)adenosine (ms(2)i(6)A) at position 37 in tRNAs that read codons beginning with uridine. The sequence is that of tRNA-2-methylthio-N(6)-dimethylallyladenosine synthase from Kineococcus radiotolerans (strain ATCC BAA-149 / DSM 14245 / SRS30216).